A 508-amino-acid chain; its full sequence is 2'-5'-oligoadenylate synthase-like protein 2 (508 aa).

Position 69 (Ser-69) interacts with ATP. The Mg(2+) site is built by Asp-81, Asp-83, and Asp-154. The ATP site is built by Arg-213 and Lys-216. In terms of domain architecture, Ubiquitin-like spans Ile-435–Glu-473.

Belongs to the 2-5A synthase family. It depends on Mg(2+) as a cofactor. Strongly expressed in spleen dendritic cells, whereas, in bone marrow-derived dendritic cells, the amount increases during the maturation process. Expressed in many organs, the highest levels being in thymus, lung, and bone marrow.

It catalyses the reaction 3 ATP = 5'-triphosphoadenylyl-(2'-&gt;5')-adenylyl-(2'-&gt;5')-adenosine + 2 diphosphate. With respect to regulation, produced as a latent enzyme which is activated by dsRNA generated during the course of viral infection. The dsRNA activator must be at least 15 nucleotides long, and no modification of the 2'-hydroxyl group is tolerated. ssRNA or dsDNA do not act as activators. In terms of biological role, interferon-induced, dsRNA-activated antiviral enzyme which plays a critical role in cellular innate antiviral response. Synthesizes oligomers of 2'-5'-oligoadenylates (2-5A) from ATP which then bind to the inactive monomeric form of ribonuclease L (RNase L) leading to its dimerization and subsequent activation. Activation of RNase L leads to degradation of cellular as well as viral RNA, resulting in the inhibition of protein synthesis, thus terminating viral replication. Can mediate the antiviral effect via the classical RNase L-dependent pathway or an alternative antiviral pathway independent of RNase L. The chain is 2'-5'-oligoadenylate synthase-like protein 2 (Oasl2) from Mus musculus (Mouse).